The primary structure comprises 301 residues: DSC E3 ubiquitin ligase complex subunit B (301 aa).

3 helical membrane-spanning segments follow: residues Ala-9 to Leu-29, Leu-52 to Leu-72, and Thr-90 to Leu-110. The span at Ala-268–Gly-284 shows a compositional bias: low complexity. Residues Ala-268 to Leu-301 form a disordered region. The segment covering Arg-290 to Leu-301 has biased composition (basic and acidic residues).

In terms of assembly, component of the DSC E3 ubiquitin ligase complex composed of dscA, dscB, dscC and dscD.

It localises to the endoplasmic reticulum membrane. It catalyses the reaction S-ubiquitinyl-[E2 ubiquitin-conjugating enzyme]-L-cysteine + [acceptor protein]-L-lysine = [E2 ubiquitin-conjugating enzyme]-L-cysteine + N(6)-ubiquitinyl-[acceptor protein]-L-lysine.. The protein operates within protein modification; protein ubiquitination. Functionally, component of the DSC E3 ubiquitin ligase complex which is required for the srbA transcriptional activator proteolytic cleavage to release the soluble transcription factor from the membrane in low oxygen or sterol conditions. Required for growth during hypoxia and triazole drug susceptibility, as well as for virulence in a murine model of invasive pulmonary aspergillosis (IPA). The protein is DSC E3 ubiquitin ligase complex subunit B of Aspergillus fumigatus (strain ATCC MYA-4609 / CBS 101355 / FGSC A1100 / Af293) (Neosartorya fumigata).